The chain runs to 512 residues: Maturase K (512 aa).

Belongs to the intron maturase 2 family. MatK subfamily.

The protein localises to the plastid. It localises to the chloroplast. Functionally, usually encoded in the trnK tRNA gene intron. Probably assists in splicing its own and other chloroplast group II introns. This Piper cenocladum (Ant piper) protein is Maturase K.